We begin with the raw amino-acid sequence, 64 residues long: Large ribosomal subunit protein bL35 (64 aa).

Belongs to the bacterial ribosomal protein bL35 family.

In Shewanella loihica (strain ATCC BAA-1088 / PV-4), this protein is Large ribosomal subunit protein bL35.